The sequence spans 377 residues: uncharacterized protein (377 aa).

10 helical membrane passes run 4–24, 41–61, 85–105, 134–154, 159–179, 192–212, 278–298, 301–321, 327–347, and 356–376; these read LLTP…LLGT, ASFG…FPIT, IAAL…FLFG, FHAM…IATV, VYVH…PFLL, GAVG…IALA, VFGI…AGFV, GVGY…DLVV, IASV…AIGL, and LCFF…PVLK.

It to R.meliloti MosC.

Its subcellular location is the cell membrane. Its function is as follows. Could be involved in a transport system. This is an uncharacterized protein from Sinorhizobium fredii (strain NBRC 101917 / NGR234).